An 84-amino-acid polypeptide reads, in one-letter code: Conotoxin Tx8.1 (84 aa).

The signal sequence occupies residues 1–19 (LKMGAMFVLLLLFTLASSH). The propeptide occupies 20–44 (REGDIQARKTHLKSDFYRTLPRFAR).

The protein belongs to the conotoxin S superfamily. In terms of processing, contains 5 disulfide bonds. As to expression, expressed by the venom duct.

The protein resides in the secreted. The polypeptide is Conotoxin Tx8.1 (Conus textile (Cloth-of-gold cone)).